The sequence spans 205 residues: Imidazole glycerol phosphate synthase subunit HisH (205 aa).

The Glutamine amidotransferase type-1 domain occupies arginine 3–isoleucine 205. Cysteine 80 functions as the Nucleophile in the catalytic mechanism. Catalysis depends on residues histidine 185 and glutamate 187.

As to quaternary structure, heterodimer of HisH and HisF.

Its subcellular location is the cytoplasm. The catalysed reaction is 5-[(5-phospho-1-deoxy-D-ribulos-1-ylimino)methylamino]-1-(5-phospho-beta-D-ribosyl)imidazole-4-carboxamide + L-glutamine = D-erythro-1-(imidazol-4-yl)glycerol 3-phosphate + 5-amino-1-(5-phospho-beta-D-ribosyl)imidazole-4-carboxamide + L-glutamate + H(+). The enzyme catalyses L-glutamine + H2O = L-glutamate + NH4(+). The protein operates within amino-acid biosynthesis; L-histidine biosynthesis; L-histidine from 5-phospho-alpha-D-ribose 1-diphosphate: step 5/9. IGPS catalyzes the conversion of PRFAR and glutamine to IGP, AICAR and glutamate. The HisH subunit catalyzes the hydrolysis of glutamine to glutamate and ammonia as part of the synthesis of IGP and AICAR. The resulting ammonia molecule is channeled to the active site of HisF. In Acinetobacter baylyi (strain ATCC 33305 / BD413 / ADP1), this protein is Imidazole glycerol phosphate synthase subunit HisH.